A 489-amino-acid polypeptide reads, in one-letter code: Mitochondrial distribution and morphology protein 34 (489 aa).

The 205-residue stretch at 1–205 folds into the SMP-LTD domain; that stretch reads MSFNINWDSI…LPSVLYKFSQ (205 aa).

Belongs to the MDM34 family. Component of the ER-mitochondria encounter structure (ERMES) or MDM complex, composed of MMM1, MDM10, MDM12 and MDM34.

It is found in the mitochondrion outer membrane. Its function is as follows. Component of the ERMES/MDM complex, which serves as a molecular tether to connect the endoplasmic reticulum (ER) and mitochondria. Components of this complex are involved in the control of mitochondrial shape and protein biogenesis, and function in nonvesicular lipid trafficking between the ER and mitochondria. MDM34 is required for the interaction of the ER-resident membrane protein MMM1 and the outer mitochondrial membrane-resident beta-barrel protein MDM10. The protein is Mitochondrial distribution and morphology protein 34 of Komagataella phaffii (strain GS115 / ATCC 20864) (Yeast).